The primary structure comprises 380 residues: Queuine tRNA-ribosyltransferase (380 aa).

Asp-96 serves as the catalytic Proton acceptor. Residues Asp-96–Phe-100, Asp-150, Gln-193, and Gly-220 each bind substrate. Residues Gly-251–Ser-257 form an RNA binding region. Catalysis depends on Asp-270, which acts as the Nucleophile. The tract at residues Thr-275 to Arg-279 is RNA binding; important for wobble base 34 recognition. Positions 308, 310, 313, and 339 each coordinate Zn(2+).

It belongs to the queuine tRNA-ribosyltransferase family. As to quaternary structure, homodimer. Within each dimer, one monomer is responsible for RNA recognition and catalysis, while the other monomer binds to the replacement base PreQ1. Zn(2+) is required as a cofactor.

It catalyses the reaction 7-aminomethyl-7-carbaguanine + guanosine(34) in tRNA = 7-aminomethyl-7-carbaguanosine(34) in tRNA + guanine. The protein operates within tRNA modification; tRNA-queuosine biosynthesis. Functionally, catalyzes the base-exchange of a guanine (G) residue with the queuine precursor 7-aminomethyl-7-deazaguanine (PreQ1) at position 34 (anticodon wobble position) in tRNAs with GU(N) anticodons (tRNA-Asp, -Asn, -His and -Tyr). Catalysis occurs through a double-displacement mechanism. The nucleophile active site attacks the C1' of nucleotide 34 to detach the guanine base from the RNA, forming a covalent enzyme-RNA intermediate. The proton acceptor active site deprotonates the incoming PreQ1, allowing a nucleophilic attack on the C1' of the ribose to form the product. After dissociation, two additional enzymatic reactions on the tRNA convert PreQ1 to queuine (Q), resulting in the hypermodified nucleoside queuosine (7-(((4,5-cis-dihydroxy-2-cyclopenten-1-yl)amino)methyl)-7-deazaguanosine). The sequence is that of Queuine tRNA-ribosyltransferase from Streptococcus pyogenes serotype M49 (strain NZ131).